The primary structure comprises 260 residues: Opacity protein opA58 (260 aa).

A signal peptide spans 1-23 (MNPAPKKPSLLFSSLLFSSAAQA).

The protein belongs to the opacity porin family.

It localises to the cell outer membrane. Its function is as follows. Implicated in a number of adherence functions. OPA proteins are implicated in pathogenesis and are subject to phase variation. The protein is Opacity protein opA58 (opaJ) of Neisseria gonorrhoeae.